A 161-amino-acid polypeptide reads, in one-letter code: MASIAVCPGSFDPVTYGHLDIIKRGAHIFEQVYVCVLNNSSKKPLFSVEERCELLREVTKDIPNITVETSQGLLIDYAKRKNAKAILRGLRAVSDFEYEMQGTSVNRVLDESIETFFMMTNNQYSFLSSSIVKEVARYNGSVSEFVPPEVELALQQKFRQG.

Ser10 contributes to the substrate binding site. ATP is bound by residues 10–11 (SF) and His18. Residues Lys42, Leu74, and Arg88 each contribute to the substrate site. ATP-binding positions include 88–89 (RG), Glu99, and 124–130 (YSFLSSS).

This sequence belongs to the bacterial CoaD family. Homohexamer. It depends on Mg(2+) as a cofactor.

The protein resides in the cytoplasm. It carries out the reaction (R)-4'-phosphopantetheine + ATP + H(+) = 3'-dephospho-CoA + diphosphate. It functions in the pathway cofactor biosynthesis; coenzyme A biosynthesis; CoA from (R)-pantothenate: step 4/5. Its function is as follows. Reversibly transfers an adenylyl group from ATP to 4'-phosphopantetheine, yielding dephospho-CoA (dPCoA) and pyrophosphate. The polypeptide is Phosphopantetheine adenylyltransferase (Bacillus subtilis (strain 168)).